A 121-amino-acid polypeptide reads, in one-letter code: Small ribosomal subunit protein uS13 (121 aa).

A disordered region spans residues 91-121; that stretch reads HKRGLPVRGQRTRTNARTRKGPRRAAASLKK.

This sequence belongs to the universal ribosomal protein uS13 family. As to quaternary structure, part of the 30S ribosomal subunit. Forms a loose heterodimer with protein S19. Forms two bridges to the 50S subunit in the 70S ribosome.

Located at the top of the head of the 30S subunit, it contacts several helices of the 16S rRNA. In the 70S ribosome it contacts the 23S rRNA (bridge B1a) and protein L5 of the 50S subunit (bridge B1b), connecting the 2 subunits; these bridges are implicated in subunit movement. Contacts the tRNAs in the A and P-sites. The chain is Small ribosomal subunit protein uS13 from Bordetella petrii (strain ATCC BAA-461 / DSM 12804 / CCUG 43448).